The sequence spans 685 residues: Methionine--tRNA ligase (685 aa).

Residues 12-22 (PYANGSIHLGH) carry the 'HIGH' region motif. Residues Cys-143, Cys-146, Cys-156, and Cys-159 each contribute to the Zn(2+) site. Positions 339–343 (KMSKS) match the 'KMSKS' region motif. Lys-342 is a binding site for ATP. Residues 582–685 (DFMKIDMRVA…AGAQPGDKVG (104 aa)) form the tRNA-binding domain.

This sequence belongs to the class-I aminoacyl-tRNA synthetase family. MetG type 1 subfamily. In terms of assembly, homodimer. It depends on Zn(2+) as a cofactor.

It localises to the cytoplasm. The enzyme catalyses tRNA(Met) + L-methionine + ATP = L-methionyl-tRNA(Met) + AMP + diphosphate. Functionally, is required not only for elongation of protein synthesis but also for the initiation of all mRNA translation through initiator tRNA(fMet) aminoacylation. This Neisseria meningitidis serogroup C (strain 053442) protein is Methionine--tRNA ligase.